The sequence spans 1233 residues: ATP-dependent helicase/nuclease subunit A (1233 aa).

A UvrD-like helicase ATP-binding domain is found at 3–474 (TKWTEEQKQA…ILLYKNFRSR (472 aa)). 24–31 (AAAGSGKT) is a binding site for ATP. One can recognise a UvrD-like helicase C-terminal domain in the interval 518-809 (VTGGAVELHL…RIMSIHKSKG (292 aa)). Residues 533–555 (VEEEVEEKEEEKNEEKDFEEEEE) are disordered.

This sequence belongs to the helicase family. AddA subfamily. Heterodimer of AddA and AddB/RexB. Requires Mg(2+) as cofactor.

The catalysed reaction is Couples ATP hydrolysis with the unwinding of duplex DNA by translocating in the 3'-5' direction.. It carries out the reaction ATP + H2O = ADP + phosphate + H(+). Functionally, the heterodimer acts as both an ATP-dependent DNA helicase and an ATP-dependent, dual-direction single-stranded exonuclease. Recognizes the chi site generating a DNA molecule suitable for the initiation of homologous recombination. The AddA nuclease domain is required for chi fragment generation; this subunit has the helicase and 3' -&gt; 5' nuclease activities. The polypeptide is ATP-dependent helicase/nuclease subunit A (Thermoanaerobacter pseudethanolicus (strain ATCC 33223 / 39E) (Clostridium thermohydrosulfuricum)).